The sequence spans 358 residues: 3-dehydroquinate synthase (358 aa).

Residues Gly-102–Asp-106, Thr-126–Thr-127, Lys-138, and Lys-147 each bind NAD(+). Residues Glu-180, His-243, and His-260 each coordinate Zn(2+).

Belongs to the sugar phosphate cyclases superfamily. Dehydroquinate synthase family. Co(2+) is required as a cofactor. The cofactor is Zn(2+). It depends on NAD(+) as a cofactor.

It localises to the cytoplasm. The enzyme catalyses 7-phospho-2-dehydro-3-deoxy-D-arabino-heptonate = 3-dehydroquinate + phosphate. Its pathway is metabolic intermediate biosynthesis; chorismate biosynthesis; chorismate from D-erythrose 4-phosphate and phosphoenolpyruvate: step 2/7. Catalyzes the conversion of 3-deoxy-D-arabino-heptulosonate 7-phosphate (DAHP) to dehydroquinate (DHQ). This Shouchella clausii (strain KSM-K16) (Alkalihalobacillus clausii) protein is 3-dehydroquinate synthase.